The primary structure comprises 232 residues: Beta-casein (232 aa).

A signal peptide spans 1–15 (MKVLILACRVALALA). Phosphoserine occurs at positions 30, 32, 33, and 34.

This sequence belongs to the beta-casein family. Mammary gland specific. Secreted in milk.

The protein resides in the secreted. In terms of biological role, important role in determination of the surface properties of the casein micelles. This is Beta-casein (CSN2) from Camelus dromedarius (Dromedary).